The chain runs to 901 residues: MLIKMLTKVFGSRNDRTLRRMRKVVALINGMEPALEKLSDEELKAKTAEFRARLEKGETLENLLPEAFAVVREASKRVFGMRHFDVQLLGGMVLNDRCIAEMRTGEGKTLTATLPAYLNALTGKGVHVVTVNDYLAQRDAENNRPLFEFLGMSVAVNMSGMPAPAKREAYAADITYGTNNEYGFDYLRDNMAFSPEERVQRKLHYALVDEVDSILIDEARTPLIISGPAEDSSELYKKVNKIIPHLVRQEKEDSDTFQGEGHFSVDEKARQVNLTERGLVLVEELLVKEGIMDEGESLYSPGNIMLMHHVTAALRAHVLFTRDVDYIVKDGEVIIVDEHTGRTMQGRRWSDGLHQAVEAKEGVEIQNENQTLASITFQNYFRLYEKLAGMTGTADTEAFEFSSIYKLDTVVVPTNRPMIRKDLPDLVYMTEAEKIDAIIEDIKERTAKGQPVLVGTISIEKSEVISQALTKAGIEHNVLNAKFHAREADIVAQAGYPGAVTIATNMAGRGTDIMLGGSWQAEVAELEAPSEEQIAQIKADWQKRHDAVLASGGLHIIGTERHESRRIDNQLRGRSGRQGDPGSSRFYLSMEDALMRIFASDRVANMMRKLGMKPGEAIEHPWVTKAIANAQRKVESRNFDIRKQLLEYDDVANDQRRAIYTQRNELLDVADISETINSIREDVFKATIDAHIPPQSLEEMWDIPGLEERLKNDFDLELPIAQWLDKEPELHEETLRERILESAKEVYARKEEVVGAEMMRHFEKGVMLQTLDSLWKEHLAAMDYLRQGIHLRGYAQKDPKQEYKRESFAMFAAMLESLKYEVISTISKVQVRMPEEVEAMEQQRREEAERLAQMQQLSHQDDETAAAAALAEQTGERKVGRNDPCPCGSGKKYKQCHGRLS.

Residues glutamine 87, glycine 105–threonine 109, and aspartate 512 contribute to the ATP site. The tract at residues glutamine 855–lysine 891 is disordered. Zn(2+) contacts are provided by cysteine 885, cysteine 887, cysteine 896, and histidine 897.

Belongs to the SecA family. In terms of assembly, monomer and homodimer. Part of the essential Sec protein translocation apparatus which comprises SecA, SecYEG and auxiliary proteins SecDF-YajC and YidC. The cofactor is Zn(2+).

The protein localises to the cell inner membrane. It localises to the cytoplasm. It catalyses the reaction ATP + H2O + cellular proteinSide 1 = ADP + phosphate + cellular proteinSide 2.. Its function is as follows. Part of the Sec protein translocase complex. Interacts with the SecYEG preprotein conducting channel. Has a central role in coupling the hydrolysis of ATP to the transfer of proteins into and across the cell membrane, serving both as a receptor for the preprotein-SecB complex and as an ATP-driven molecular motor driving the stepwise translocation of polypeptide chains across the membrane. This is Protein translocase subunit SecA from Cronobacter sakazakii (strain ATCC BAA-894) (Enterobacter sakazakii).